The primary structure comprises 923 residues: MSQFKRQRINPLPGGRNFSGTASTSLLGPPPGLLTPPVATELSQNARHLQGGEKQRVFTGIVTSLHDYFGVVDEEVFFQLSVVKGRLPQLGEKVLVKAAYNPGQAVPWNAVKVQTLSNQPLLKSPAPPLLHVAALGQKQGILGAQPQLIFQPHRIPPLFPQKPLSLFQTSHTLHLSHLNRFPARGPHGRLDQGRSDDYDSKKRKQRAGGEPWGAKKPRHDLPPYRVHLTPYTVDSPICDFLELQRRYRSLLVPSDFLSVHLSWLSAFPLSQPFSLHHPSRIQVSSEKEAAPDAGAEPITADSDPAYSSKVLLLSSPGLEELYRCCMLFVDDMAEPRETPEHPLKQIKFLLGRKEEEAVLVGGEWSPSLDGLDPQADPQVLVRTAIRCAQAQTGIDLSGCTKWWRFAEFQYLQPGPPRRLQTVVVYLPDVWTIMPTLEEWEALCQQKAAEAAPPTQEAQGETEPTEQAPDALEQAADTSRRNAETPEATTQQETDTDLPEAPPPPLEPAVIARPGCVNLSLHGIVEDRRPKERISFEVMVLAELFLEMLQRDFGYRVYKMLLSLPEKVVSPPEPEKEEAAKEEATKEEEAIKEEVVKEPKDEAQNEGPATESEAPLKEDGLLPKPLSSGGEEEEKPRGEASEDLCEMALDPELLLLRDDGEEEFAGAKLEDSEVRSVASNQSEMEFSSLQDMPKELDPSAVLPLDCLLAFVFFDANWCGYLHRRDLERILLTLGIRLSAEQAKQLVSRVVTQNICQYRSLQYSRQEGLDGGLPEEVLFGNLDLLPPPGKSTKPGAAPTEHKALVSHNGSLINVGSLLQRAEQQDSGRLYLENKIHTLELKLEESHNRFSATEVTNKTLAAEMQELRVRLAEAEETARTAERQKSQLQRLLQELRRRLTPLQLEIQRVVEKADSWVEKEEPAPSN.

A disordered region spans residues 1 to 35; the sequence is MSQFKRQRINPLPGGRNFSGTASTSLLGPPPGLLT. Phosphothreonine is present on Thr-35. Lys-112 is subject to N6-acetyllysine; by KAT8. Position 123 is an N6-methyllysine (Lys-123). Ser-124 carries the phosphoserine modification. 3 disordered regions span residues 178-218, 446-510, and 568-643; these read LNRF…KKPR, KAAE…PAVI, and VSPP…SEDL. Arg-180 bears the Omega-N-methylarginine mark. Basic and acidic residues predominate over residues 188–200; that stretch reads GRLDQGRSDDYDS. An N6-acetyllysine; by KAT8 modification is found at Lys-215. The span at 446–458 shows a compositional bias: low complexity; that stretch reads KAAEAAPPTQEAQ. Thr-454 bears the Phosphothreonine; by ATM, ATR and CK2 mark. A Phosphothreonine modification is found at Thr-484. Position 569 is a phosphoserine (Ser-569). Over residues 572-602 the composition is skewed to basic and acidic residues; it reads EPEKEEAAKEEATKEEEAIKEEVVKEPKDEA. Lys-591 participates in a covalent cross-link: Glycyl lysine isopeptide (Lys-Gly) (interchain with G-Cter in SUMO2 and SUMO3); alternate. Residue Lys-591 forms a Glycyl lysine isopeptide (Lys-Gly) (interchain with G-Cter in SUMO2); alternate linkage. Residues 610 to 670 form an interaction with MCC region; it reads ESEAPLKEDG…EEFAGAKLED (61 aa). Ser-627, Ser-675, Ser-678, Ser-681, Ser-687, and Ser-808 each carry phosphoserine. The interaction with NR1D1 stretch occupies residues 704 to 923; that stretch reads DCLLAFVFFD…VEKEEPAPSN (220 aa). A coiled-coil region spans residues 829-909; sequence LENKIHTLEL…QLEIQRVVEK (81 aa). Residue Thr-897 is modified to Phosphothreonine.

In terms of assembly, component of the DBIRD complex. Interacts with ZNF326/ZIRD; the interaction is direct. Interacts (via N-terminus) with SIRT1, which inhibits the deacetylation of substrates. Interacts (via N-terminus) with SUV39H1; this interaction abolishes the interaction with SIRT1. Component of a nuclear receptor-mediated transcription complex composed of at least ZNF335, CCAR2 and EMSY; the complex stimulates the transcription of nuclear receptor target genes such as SOX9 and HOXA1. Within the complex interacts with EMSY and interacts with ZNF335 (via C-terminus). Components of this complex may associate with components of a histone methylation complex to form a complex at least composed of ZNF335, HCFC1, CCAR2, EMSY, MKI67, RBBP5, ASH2L and WDR5. Within this complex, interacts with ASH2L. Interacts with NR1D1. Interacts (via N-terminus) with ESR1 and ESR2. Interacts (via N-terminus) with HDAC3 (via C-terminus). Interacts with HDAC1 and MED2F. Interacts with MCC. Interacts (via N-terminus) with NR1H2 and NR1H3 in a ligand-independent manner. Interacts with CSNK2A1. Interacts (via N-terminus) with p53/TP53. Interacts (via N-terminus) with BRCA1 (via the BRCT domains). Interacts (via N-terminus) with CHEK2 (via protein kinase domain). Interacts with PSEM3. Interacts (via N-terminus) with PSIA3 and SENP1. The sumoylated form shows a preferential interaction with SIRT1 as compared to its unmodified form. Interacts with CECR2; may form part of the CERF-1 and/or CEF-5 ISWI chromatin remodeling complexes in embryonic stem cells. ATM/ATR-mediated phosphorylation at Thr-454 upon DNA damage promotes binding to SIRT1. Phosphorylation at Thr-454 promotes its sumoylation by switching the binding partner of CCAR2 from SENP1 to PIAS3. Post-translationally, acetylation at Lys-112 and Lys-215 by KAT8 prevents inhibitory binding to SIRT1 and increases its deacetylase activity. In terms of processing, genotoxic stress induces its sumoylation and sumoylation promotes the SIRT1-CCAR2 interaction which in turn inhibits SIRT1-mediated deacetylation of p53/TP53. Sumoylation leads to transcriptional activation of p53/TP53 by sequestering SIRT1 from p53/TP53. Desumoylated by SENP1. Expressed in gastric carcinoma tissue and the expression gradually increases with the progression of the carcinoma (at protein level). Expressed ubiquitously in normal tissues. Expressed in 84 to 100% of neoplastic breast, lung, and colon tissues.

The protein resides in the nucleus. The protein localises to the cytoplasm. Its subcellular location is the cytoskeleton. It localises to the spindle. Core component of the DBIRD complex, a multiprotein complex that acts at the interface between core mRNP particles and RNA polymerase II (RNAPII) and integrates transcript elongation with the regulation of alternative splicing: the DBIRD complex affects local transcript elongation rates and alternative splicing of a large set of exons embedded in (A + T)-rich DNA regions. Inhibits SIRT1 deacetylase activity leading to increasing levels of p53/TP53 acetylation and p53-mediated apoptosis. Inhibits SUV39H1 methyltransferase activity. Mediates ligand-dependent transcriptional activation by nuclear hormone receptors. Plays a critical role in maintaining genomic stability and cellular integrity following UV-induced genotoxic stress. Regulates the circadian expression of the core clock components NR1D1 and BMAL1. Enhances the transcriptional repressor activity of NR1D1 through stabilization of NR1D1 protein levels by preventing its ubiquitination and subsequent degradation. Represses the ligand-dependent transcriptional activation function of ESR2. Acts as a regulator of PCK1 expression and gluconeogenesis by a mechanism that involves, at least in part, both NR1D1 and SIRT1. Negatively regulates the deacetylase activity of HDAC3 and can alter its subcellular localization. Positively regulates the beta-catenin pathway (canonical Wnt signaling pathway) and is required for MCC-mediated repression of the beta-catenin pathway. Represses ligand-dependent transcriptional activation function of NR1H2 and NR1H3 and inhibits the interaction of SIRT1 with NR1H3. Plays an important role in tumor suppression through p53/TP53 regulation; stabilizes p53/TP53 by affecting its interaction with ubiquitin ligase MDM2. Represses the transcriptional activator activity of BRCA1. Inhibits SIRT1 in a CHEK2 and PSEM3-dependent manner and inhibits the activity of CHEK2 in vitro. The protein is Cell cycle and apoptosis regulator protein 2 (CCAR2) of Homo sapiens (Human).